Here is a 42-residue protein sequence, read N- to C-terminus: Alpha-lactalbumin I (42 aa).

Residues 1-42 form the C-type lysozyme domain; the sequence is IDYRKCQASQILKEHGMDKVIPLPELVCTMFHISGLSPQAEV.

Belongs to the glycosyl hydrolase 22 family. As to quaternary structure, lactose synthase (LS) is a heterodimer of a catalytic component, beta1,4-galactosyltransferase (beta4Gal-T1) and a regulatory component, alpha-lactalbumin (LA). Mammary gland specific. Secreted in milk.

The protein resides in the secreted. In terms of biological role, regulatory subunit of lactose synthase, changes the substrate specificity of galactosyltransferase in the mammary gland making glucose a good acceptor substrate for this enzyme. This enables LS to synthesize lactose, the major carbohydrate component of milk. In other tissues, galactosyltransferase transfers galactose onto the N-acetylglucosamine of the oligosaccharide chains in glycoproteins. This Macropus giganteus (Eastern gray kangaroo) protein is Alpha-lactalbumin I (LALBA).